The primary structure comprises 445 residues: Methyl-CpG-binding domain protein 4-like protein (445 aa).

Aspartate 429 is a catalytic residue.

Isoform 1 and isoform 4: Expressed in leaves and flowers, but not in roots or stems.

The protein localises to the nucleus. Its function is as follows. Monofunctional DNA glycosylase targeting U:G and T:G mispairs. Excises uracil derivatives and exhibits a preference for a CpG sequence context, irrespective of the methylation status of the complementary strand. The activity follows a biphasic kinetics, with an initial burst of product accumulation followed by a slower phase. Specifically binds its reaction product. Triggers the base excision repair (BER) pathway. The protein is Methyl-CpG-binding domain protein 4-like protein of Arabidopsis thaliana (Mouse-ear cress).